Here is a 364-residue protein sequence, read N- to C-terminus: DNA replication and repair protein RecF (364 aa).

Position 30-37 (30-37 (GENGSGKT)) interacts with ATP.

The protein belongs to the RecF family.

The protein resides in the cytoplasm. The RecF protein is involved in DNA metabolism; it is required for DNA replication and normal SOS inducibility. RecF binds preferentially to single-stranded, linear DNA. It also seems to bind ATP. This Pseudoalteromonas translucida (strain TAC 125) protein is DNA replication and repair protein RecF.